The following is a 414-amino-acid chain: 2,3-diketo-5-methylthiopentyl-1-phosphate enolase (414 aa).

Catalysis depends on lysine 99, which acts as the Proton acceptor. Residues lysine 148, 174 to 177 (KDDE), histidine 265, glycine 338, and 360 to 361 (GG) contribute to the substrate site. The Mg(2+) site is built by lysine 174, aspartate 176, and glutamate 177. Lysine 174 is subject to N6-carboxylysine.

This sequence belongs to the RuBisCO large chain family. Type IV subfamily. As to quaternary structure, homodimer. Mg(2+) is required as a cofactor.

It carries out the reaction 5-methylsulfanyl-2,3-dioxopentyl phosphate = 2-hydroxy-5-methylsulfanyl-3-oxopent-1-enyl phosphate. The protein operates within amino-acid biosynthesis; L-methionine biosynthesis via salvage pathway; L-methionine from S-methyl-5-thio-alpha-D-ribose 1-phosphate: step 3/6. Catalyzes the enolization of 2,3-diketo-5-methylthiopentyl-1-phosphate (DK-MTP-1-P) into 2-hydroxy-3-keto-5-methylthiopentenyl-1-phosphate (HK-MTPenyl-1-P). This Bacillus mycoides (strain KBAB4) (Bacillus weihenstephanensis) protein is 2,3-diketo-5-methylthiopentyl-1-phosphate enolase.